The following is a 130-amino-acid chain: Small ribosomal subunit protein uS11 (130 aa).

Belongs to the universal ribosomal protein uS11 family. In terms of assembly, part of the 30S ribosomal subunit. Interacts with proteins S7 and S18. Binds to IF-3.

Located on the platform of the 30S subunit, it bridges several disparate RNA helices of the 16S rRNA. Forms part of the Shine-Dalgarno cleft in the 70S ribosome. This chain is Small ribosomal subunit protein uS11, found in Prochlorococcus marinus (strain NATL1A).